Reading from the N-terminus, the 65-residue chain is Large ribosomal subunit protein bL35 (65 aa).

A disordered region spans residues 1–26 (MPKIKTVRGAAKRFKKTASGGFKRKQ). Residues 10-26 (AAKRFKKTASGGFKRKQ) are compositionally biased toward basic residues.

Belongs to the bacterial ribosomal protein bL35 family.

The polypeptide is Large ribosomal subunit protein bL35 (Actinobacillus succinogenes (strain ATCC 55618 / DSM 22257 / CCUG 43843 / 130Z)).